We begin with the raw amino-acid sequence, 447 residues long: Cysteine--tRNA ligase (447 aa).

Cys-28 serves as a coordination point for Zn(2+). Positions 30–40 (PTVYNYIHIGN) match the 'HIGH' region motif. The Zn(2+) site is built by Cys-211, His-236, and Glu-240. A 'KMSKS' region motif is present at residues 268–272 (KMSKS). Lys-271 is a binding site for ATP.

The protein belongs to the class-I aminoacyl-tRNA synthetase family. Monomer. The cofactor is Zn(2+).

The protein localises to the cytoplasm. The catalysed reaction is tRNA(Cys) + L-cysteine + ATP = L-cysteinyl-tRNA(Cys) + AMP + diphosphate. In Streptococcus thermophilus (strain CNRZ 1066), this protein is Cysteine--tRNA ligase.